The chain runs to 1247 residues: MEFIPAQTYYNRRYQPRPWTQRPTIQVIRPKPRRRRPAGQLAQLISAVSRLALRTVPQKPRRTRKIKKQKQVKQEQQSTTNQKKKAPKQKQTQKKKRPGRRERMCMKIENDCIFEVRHEGKVTGYACLVGDKVMKPAHVKGTIDNADLAKLAFKRSSKYDLECAQIPVHMKSDASKFTHEKPEGYYNWHHGAVQYSGGRFTIPTGAGKPGDSGRPIFDNKGRVVAIVLGGANEGTRTALSVVTWNKDIVTKITPEGSVEWSLALPVMCLLANTTFPCSQPPCAPCCYEKKPEETLRMLEDNVMQPGYYQLLDSALACSQRRQKRNARENFNVYKVTRPYLAHCPDCGEGHSCHSPIALERIRSEATDGTLKIQVSLQIGIKTDDSHDWTKLRYMDSHTPVDADRSGLFVRTSAPCTITGTMGHFILARCPKGETLTVGFVDSRRISHTCMHPFRHEPPLIGREKFHSRPQHGKELPCSTYVHTTAATAEEIEVHMPPDTPDYTLMTQQAGNVKITVDGQTVRYKCKCDGSNEGLITADKVINNCKVDQCHTAVTNHKKWQYNSPLTPRNSEQGDRKGKIHIPFPLVNTTCRVPKARNPTVTYGKNRVTLLLHPDHPTLLSYRAMGRIPDYHEEWITNKKEISITVPAEGLEVTWGNNDPYKYWPQLSTNGTAHGHPHEIILYYYELYPTTTIAVLAAASIVITSLVGLSLGMCICARRRCITPYELTPGATIPFLLGVLCCARTAKAASYYEAATYLWNEQQPLFWLQLLIPLSAAIVVCNCLKLLPCCCKTLTFLAVMSIGARTVTAYEHATVIPNTVGVPCKTLVSRPGYSPMVLEMELQSVTLEPALSLDYITCEYKTITPSPYVKCCGTAECKAKNLPDYNCKVFTGVYPFMWGGAYCFCDAENTQLSEAHVEKSESCKTEFASAYRAHTASVSAKLRVFYQGNNITVSAYANGDHAVTVEDAKFVIGPLSSAWSPFDNKIVVYKGEVYNMDYPPFGAGRPGQFGDIQSRTPDSKDVYANTQLILQRPAAGAIHVPYSQAPSGFKYWLKEKGASLQHTAPFGCQIATNPVRAVNCAVGNIPVSIDIPDAAFTRVTDAPSITDMSCEVASCTHSSDFGGAAVIKYTASKKGKCAVHSVTNAVTIREPNVDVKGTAQLQIAFSTALASAEFKVQICSTLVHCSATCHPPKDHIVNYPSPHTTLGVQDISTTAMSWVQKITGGVGLVVAIAALILIIVLCVSFSRH.

Residues 36 to 67 (RPAGQLAQLISAVSRLALRTVPQKPRRTRKIK) form a host transcription inhibition region. Residues 54–103 (RTVPQKPRRTRKIKKQKQVKQEQQSTTNQKKKAPKQKQTQKKKRPGRRER) are disordered. Composition is skewed to basic residues over residues 59–71 (KPRRTRKIKKQKQ) and 82–100 (QKKKAPKQKQTQKKKRPGR). The Nuclear localization signal motif lies at 60 to 98 (PRRTRKIKKQKQVKQEQQSTTNQKKKAPKQKQTQKKKRP). The binding to the viral RNA stretch occupies residues 83–113 (KKKAPKQKQTQKKKRPGRRERMCMKIENDCI). Positions 98 to 112 (PGRRERMCMKIENDC) are ribosome-binding. Cysteine 112 and cysteine 127 are joined by a disulfide. The region spanning 112-260 (CIFEVRHEGK…KITPEGSVEW (149 aa)) is the Peptidase S3 domain. Histidine 138 functions as the Charge relay system in the catalytic mechanism. Residues 143 to 153 (IDNADLAKLAF) carry the Nuclear export signal motif. Positions 154 to 159 (KRSSKY) are interaction with spike glycoprotein E2. The active-site Charge relay system is the aspartate 160. Residues 182 to 192 (PEGYYNWHHGA) form a dimerization of the capsid protein region. Serine 212 functions as the Charge relay system in the catalytic mechanism. The tract at residues 218-222 (DNKGR) is dimerization of the capsid protein. A functions as an uncleaved signal peptide for the precursor of protein E3/E2 region spans residues 261-273 (SLALPVMCLLANT). Intrachain disulfides connect cysteine 268–cysteine 277, cysteine 282–cysteine 286, cysteine 285–cysteine 317, cysteine 343–cysteine 449, cysteine 346–cysteine 352, cysteine 415–cysteine 429, cysteine 477–cysteine 590, cysteine 525–cysteine 549, and cysteine 527–cysteine 544. The N-linked (GlcNAc...) asparagine; by host glycan is linked to asparagine 272. Residues asparagine 587 and asparagine 669 are each glycosylated (N-linked (GlcNAc...) asparagine; by host). A helical transmembrane segment spans residues 692–712 (IAVLAAASIVITSLVGLSLGM). Positions 715-719 (CARRR) are interaction with the capsid protein. 3 S-palmitoyl cysteine; by host lipidation sites follow: cysteine 720, cysteine 740, and cysteine 741. A helical membrane pass occupies residues 720 to 740 (CITPYELTPGATIPFLLGVLC). The transient transmembrane before p62-6K protein processing stretch occupies residues 720–740 (CITPYELTPGATIPFLLGVLC). A disulfide bridge links cysteine 720 with cysteine 741. Residues 763–783 (PLFWLQLLIPLSAAIVVCNCL) form a helical membrane-spanning segment. 4 disulfides stabilise this stretch: cysteine 857-cysteine 922, cysteine 870-cysteine 902, cysteine 871-cysteine 904, and cysteine 876-cysteine 886. The segment at 892-909 (VYPFMWGGAYCFCDAENT) is E1 fusion peptide loop. Residues asparagine 949 and asparagine 1078 are each glycosylated (N-linked (GlcNAc...) asparagine; by host). Intrachain disulfides connect cysteine 1067-cysteine 1079, cysteine 1109-cysteine 1184, cysteine 1114-cysteine 1188, and cysteine 1136-cysteine 1178. A helical membrane pass occupies residues 1224 to 1244 (GVGLVVAIAALILIIVLCVSF). A lipid anchor (S-palmitoyl cysteine; by host) is attached at cysteine 1241. Cysteine 1241 carries the S-stearoyl cysteine; by host lipid modification.

As to quaternary structure, homodimer. Homomultimer. Interacts with host karyopherin KPNA4; this interaction allows the nuclear import of the viral capsid protein. Interacts with spike glycoprotein E2. Interacts with host IRAK1; the interaction leads to inhibition of IRAK1-dependent signaling. In terms of assembly, the precursor of protein E3/E2 and E1 form a heterodimer shortly after synthesis. The precursor of protein E3/E2 and E1 form a heterodimer shortly after synthesis. Processing of the precursor of protein E3/E2 into E2 and E3 results in a heterodimer of the spike glycoproteins E2 and E1. Spike at virion surface are constituted of three E2-E1 heterodimers. After target cell attachment and endocytosis, E1 change conformation to form homotrimers. Interacts with 6K protein. As to quaternary structure, interacts with spike glycoprotein E1. Processing of the precursor of protein E3/E2 into E2 and E3 results in a heterodimer of the spike glycoproteins E2 and E1. Spike at virion surface are constituted of a trimer of E2-E1 heterodimers. Interacts with 6K protein. Interacts with host MXRA8; this interaction mediates virus entry. In terms of assembly, oligomer. Interacts with spike glycoprotein E1. Interacts with spike glycoprotein E2. Structural polyprotein: Specific enzymatic cleavages in vivo yield mature proteins. Capsid protein is auto-cleaved during polyprotein translation, unmasking a signal peptide at the N-terminus of the precursor of E3/E2. The remaining polyprotein is then targeted to the host endoplasmic reticulum, where host signal peptidase cleaves it into pE2, 6K and E1 proteins. pE2 is further processed to mature E3 and E2 by host furin in trans-Golgi vesicle. In terms of processing, palmitoylated via thioester bonds. These palmitoylations may induce disruption of the C-terminus transmembrane. This would result in the reorientation of E2 C-terminus from lumenal to cytoplasmic side. Post-translationally, N-glycosylated. Palmitoylated via thioester bonds.

It localises to the virion. The protein resides in the host cytoplasm. It is found in the host cell membrane. The protein localises to the host nucleus. Its subcellular location is the virion membrane. It localises to the host Golgi apparatus. The protein resides in the host trans-Golgi network. It is found in the host endoplasmic reticulum. The catalysed reaction is Autocatalytic release of the core protein from the N-terminus of the togavirus structural polyprotein by hydrolysis of a -Trp-|-Ser- bond.. Its function is as follows. Forms an icosahedral capsid with a T=4 symmetry composed of 240 copies of the capsid protein surrounded by a lipid membrane through which penetrate 80 spikes composed of trimers of E1-E2 heterodimers. The capsid protein binds to the viral RNA genome at a site adjacent to a ribosome binding site for viral genome translation following genome release. Possesses a protease activity that results in its autocatalytic cleavage from the nascent structural protein. Following its self-cleavage, the capsid protein transiently associates with ribosomes, and within several minutes the protein binds to viral RNA and rapidly assembles into icosahedric core particles. The resulting nucleocapsid eventually associates with the cytoplasmic domain of the spike glycoprotein E2 at the cell membrane, leading to budding and formation of mature virions. In case of infection, new virions attach to target cells and after clathrin-mediated endocytosis their membrane fuses with the host endosomal membrane. This leads to the release of the nucleocapsid into the cytoplasm, followed by an uncoating event necessary for the genomic RNA to become accessible. The uncoating might be triggered by the interaction of capsid proteins with ribosomes. Binding of ribosomes would release the genomic RNA since the same region is genomic RNA-binding and ribosome-binding. Specifically inhibits interleukin-1 receptor-associated kinase 1/IRAK1-dependent signaling during viral entry, representing a means by which the alphaviruses may evade innate immune detection and activation prior to viral gene expression. In terms of biological role, provides the signal sequence for the translocation of the precursor of protein E3/E2 to the host endoplasmic reticulum. Furin-cleaved E3 remains associated with spike glycoprotein E1 and mediates pH protection of the latter during the transport via the secretory pathway. After virion release from the host cell, the assembly protein E3 is gradually released in the extracellular space. Plays a role in viral attachment to target host cell, by binding to the cell receptor MXRA8. Synthesized as a p62 precursor which is processed by furin at the cell membrane just before virion budding, giving rise to E2-E1 heterodimer. The p62-E1 heterodimer is stable, whereas E2-E1 is unstable and dissociate at low pH. p62 is processed at the last step, presumably to avoid E1 fusion activation before its final export to cell surface. E2 C-terminus contains a transitory transmembrane that would be disrupted by palmitoylation, resulting in reorientation of the C-terminal tail from lumenal to cytoplasmic side. This step is critical since E2 C-terminus is involved in budding by interacting with capsid proteins. This release of E2 C-terminus in cytoplasm occurs lately in protein export, and precludes premature assembly of particles at the endoplasmic reticulum membrane. Functionally, acts as a viroporin that participates in virus glycoprotein processing and transport to the plasma membrane, cell permeabilization and budding of viral particles. Disrupts the calcium homeostasis of the cell, probably at the endoplasmic reticulum level. This leads to cytoplasmic calcium elevation. Because of its lipophilic properties, the 6K protein is postulated to influence the selection of lipids that interact with the transmembrane domains of the glycoproteins, which, in turn, affects the deformability of the bilayer required for the extreme curvature that occurs as budding proceeds. Present in low amount in virions, about 3% compared to viral glycoproteins. Its function is as follows. Class II viral fusion protein. Fusion activity is inactive as long as E1 is bound to E2 in mature virion. After virus attachment to target cell via host MXRA8 and endocytosis, acidification of the endosome induce dissociation of E1/E2 heterodimer and concomitant trimerization of the E1 subunits. This E1 trimer is fusion active, and promotes release of viral nucleocapsid in cytoplasm after endosome and viral membrane fusion. Efficient fusion requires the presence of cholesterol and sphingolipid in the target membrane. The protein is Structural polyprotein of O'nyong-nyong virus (strain Gulu) (ONNV).